Reading from the N-terminus, the 535-residue chain is uncharacterized protein (535 aa).

A helical transmembrane segment spans residues 8–24 (LVVFGSLVFFFGLVKYF). Lysine 50 is covalently cross-linked (Glycyl lysine isopeptide (Lys-Gly) (interchain with G-Cter in ubiquitin)). 5 residues coordinate Mn(2+): aspartate 316, aspartate 327, histidine 412, glutamate 452, and glutamate 493.

The protein belongs to the peptidase M24B family. Requires Mn(2+) as cofactor.

Its subcellular location is the membrane. This is an uncharacterized protein from Saccharomyces cerevisiae (strain ATCC 204508 / S288c) (Baker's yeast).